A 267-amino-acid polypeptide reads, in one-letter code: 3-methyl-2-oxobutanoate hydroxymethyltransferase (267 aa).

Residues aspartate 45 and aspartate 84 each coordinate Mg(2+). 3-methyl-2-oxobutanoate contacts are provided by residues aspartate 45–serine 46, aspartate 84, and lysine 113. Glutamate 115 is a binding site for Mg(2+). Glutamate 182 functions as the Proton acceptor in the catalytic mechanism.

The protein belongs to the PanB family. Homodecamer; pentamer of dimers. Mg(2+) serves as cofactor.

Its subcellular location is the cytoplasm. It catalyses the reaction 3-methyl-2-oxobutanoate + (6R)-5,10-methylene-5,6,7,8-tetrahydrofolate + H2O = 2-dehydropantoate + (6S)-5,6,7,8-tetrahydrofolate. It functions in the pathway cofactor biosynthesis; coenzyme A biosynthesis. Catalyzes the reversible reaction in which hydroxymethyl group from 5,10-methylenetetrahydrofolate is transferred onto alpha-ketoisovalerate to form ketopantoate. This is 3-methyl-2-oxobutanoate hydroxymethyltransferase from Saccharolobus islandicus (strain L.S.2.15 / Lassen #1) (Sulfolobus islandicus).